The sequence spans 541 residues: Zinc finger protein 513 (541 aa).

The interval 1–120 (MPRRKQSHPQ…ARGERPGPAC (120 aa)) is disordered. Positions 44–55 (LEFEEEEEEEEG) are enriched in acidic residues. A phosphoserine mark is found at S85 and S96. Residues 103-115 (EPARGPGEARGER) show a composition bias toward basic and acidic residues. 8 consecutive C2H2-type zinc fingers follow at residues 150–172 (YSCR…MQTH), 178–200 (FRCG…TRTH), 206–228 (YRCP…QRTH), 360–382 (FACS…MKTH), 388–410 (FRCA…QRVH), 416–438 (YKCP…GRIH), 444–466 (FRCS…MLRH), and 472–494 (FRCA…QKVH). The tract at residues 492–541 (KVHGHGGAGGPGLSAPEGWAPPHSPPSVLSTRGSAALGATGSRALHTDSP) is disordered.

Belongs to the krueppel C2H2-type zinc-finger protein family. As to quaternary structure, binds DNA. Can associate with the proximal promoter regions of PAX6 and SP4, and their known targets including ARR3, RHO, OPN1MW2 and OPN1SW.

The protein resides in the nucleus. Functionally, transcriptional regulator that plays a role in retinal development and maintenance. The chain is Zinc finger protein 513 (Znf513) from Rattus norvegicus (Rat).